Consider the following 121-residue polypeptide: Small ribosomal subunit protein uS13 (121 aa).

The tract at residues 91–121 is disordered; it reads HKRGLPVRGQRTRTNARTRKGPRRAAASLKK.

The protein belongs to the universal ribosomal protein uS13 family. Part of the 30S ribosomal subunit. Forms a loose heterodimer with protein S19. Forms two bridges to the 50S subunit in the 70S ribosome.

In terms of biological role, located at the top of the head of the 30S subunit, it contacts several helices of the 16S rRNA. In the 70S ribosome it contacts the 23S rRNA (bridge B1a) and protein L5 of the 50S subunit (bridge B1b), connecting the 2 subunits; these bridges are implicated in subunit movement. Contacts the tRNAs in the A and P-sites. In Bordetella petrii (strain ATCC BAA-461 / DSM 12804 / CCUG 43448), this protein is Small ribosomal subunit protein uS13.